Here is an 854-residue protein sequence, read N- to C-terminus: Putative COX1/OXI3 intron 2 protein (854 aa).

One can recognise a Reverse transcriptase domain in the interval 329-613; that stretch reads LSKDINTNMF…EGVSFLGYDV (285 aa).

It localises to the mitochondrion. The sequence is that of Putative COX1/OXI3 intron 2 protein (AI2) from Saccharomyces cerevisiae (strain ATCC 204508 / S288c) (Baker's yeast).